Reading from the N-terminus, the 178-residue chain is Acireductone dioxygenase (178 aa).

Fe(2+) contacts are provided by His100, His102, Glu106, and His145. His100, His102, Glu106, and His145 together coordinate Ni(2+).

The protein belongs to the acireductone dioxygenase (ARD) family. In terms of assembly, monomer. Requires Fe(2+) as cofactor. It depends on Ni(2+) as a cofactor.

It catalyses the reaction 1,2-dihydroxy-5-(methylsulfanyl)pent-1-en-3-one + O2 = 3-(methylsulfanyl)propanoate + CO + formate + 2 H(+). The enzyme catalyses 1,2-dihydroxy-5-(methylsulfanyl)pent-1-en-3-one + O2 = 4-methylsulfanyl-2-oxobutanoate + formate + 2 H(+). It functions in the pathway amino-acid biosynthesis; L-methionine biosynthesis via salvage pathway; L-methionine from S-methyl-5-thio-alpha-D-ribose 1-phosphate: step 5/6. Functionally, catalyzes 2 different reactions between oxygen and the acireductone 1,2-dihydroxy-3-keto-5-methylthiopentene (DHK-MTPene) depending upon the metal bound in the active site. Fe-containing acireductone dioxygenase (Fe-ARD) produces formate and 2-keto-4-methylthiobutyrate (KMTB), the alpha-ketoacid precursor of methionine in the methionine recycle pathway. Ni-containing acireductone dioxygenase (Ni-ARD) produces methylthiopropionate, carbon monoxide and formate, and does not lie on the methionine recycle pathway. In Bacillus subtilis (strain 168), this protein is Acireductone dioxygenase (mtnD).